A 384-amino-acid polypeptide reads, in one-letter code: S-adenosylmethionine synthase (384 aa).

Residue histidine 16 coordinates ATP. Position 18 (aspartate 18) interacts with Mg(2+). Residue glutamate 44 participates in K(+) binding. Residues glutamate 57 and glutamine 100 each coordinate L-methionine. The segment at 100 to 110 (QSADIAMGVDE) is flexible loop. Residues 165 to 167 (DAK), aspartate 240, 246 to 247 (RK), alanine 263, and lysine 267 each bind ATP. Residue aspartate 240 participates in L-methionine binding. Lysine 271 contributes to the L-methionine binding site.

It belongs to the AdoMet synthase family. As to quaternary structure, homotetramer; dimer of dimers. It depends on Mg(2+) as a cofactor. The cofactor is K(+).

The protein resides in the cytoplasm. It carries out the reaction L-methionine + ATP + H2O = S-adenosyl-L-methionine + phosphate + diphosphate. It functions in the pathway amino-acid biosynthesis; S-adenosyl-L-methionine biosynthesis; S-adenosyl-L-methionine from L-methionine: step 1/1. Functionally, catalyzes the formation of S-adenosylmethionine (AdoMet) from methionine and ATP. The overall synthetic reaction is composed of two sequential steps, AdoMet formation and the subsequent tripolyphosphate hydrolysis which occurs prior to release of AdoMet from the enzyme. The protein is S-adenosylmethionine synthase of Teredinibacter turnerae (strain ATCC 39867 / T7901).